The following is a 236-amino-acid chain: tRNA1(Val) (adenine(37)-N6)-methyltransferase (236 aa).

Belongs to the methyltransferase superfamily. tRNA (adenine-N(6)-)-methyltransferase family.

It localises to the cytoplasm. It catalyses the reaction adenosine(37) in tRNA1(Val) + S-adenosyl-L-methionine = N(6)-methyladenosine(37) in tRNA1(Val) + S-adenosyl-L-homocysteine + H(+). In terms of biological role, specifically methylates the adenine in position 37 of tRNA(1)(Val) (anticodon cmo5UAC). The protein is tRNA1(Val) (adenine(37)-N6)-methyltransferase of Histophilus somni (strain 129Pt) (Haemophilus somnus).